Reading from the N-terminus, the 382-residue chain is Pyruvate dehydrogenase E1 component subunit beta, mitochondrial (382 aa).

Residues 1–46 (MSRFLRPAFRLATTATRASTIRPTPSSLITKAAAVPTTRLLQKRSY) constitute a mitochondrion transit peptide. Glu-112 serves as a coordination point for thiamine diphosphate. K(+) contacts are provided by Ile-165, Ala-213, Ile-214, Asp-216, and Asn-218.

As to quaternary structure, eukaryotic pyruvate dehydrogenase (PDH) complexes are organized as a core consisting of the oligomeric dihydrolipoamide acetyl-transferase (E2), around which are arranged multiple copies of pyruvate dehydrogenase (E1), dihydrolipoamide dehydrogenase (E3) and protein X (E3BP) bound by non-covalent bonds. The Chaetomium thermophilum PDH complex contains 60 E2 units, 12 E3BP units, about 20 E1 units, and 12 or more E3 units. The units are organized in 1 E2 60-mer, 4 E3BP trimers, about 20 E1 tetramers, and a maximum of 12 E3 dimers. Pyruvate dehydrogenase (E1) is active as a tetramer of 2 alpha and 2 beta subunits. The E3BP trimers are bound inside the icosahedral core with tetrahedral symmetry. Requires thiamine diphosphate as cofactor.

Its subcellular location is the mitochondrion. It catalyses the reaction N(6)-[(R)-lipoyl]-L-lysyl-[protein] + pyruvate + H(+) = N(6)-[(R)-S(8)-acetyldihydrolipoyl]-L-lysyl-[protein] + CO2. Functionally, the 10-megadalton pyruvate dehydrogenase complex contains multiple copies of three enzymatic components: pyruvate dehydrogenase (E1), dihydrolipoamide acetyltransferase (E2) and lipoamide dehydrogenase (E3) and catalyzes the overall oxidative decarboxylation of pyruvate to form acetyl-CoA and CO(2). Within the complex, pyruvate and thiamine pyrophosphate (TPP or vitamin B1) are bound by pyruvate dehydrogenase E1 subunits alpha and beta and pyruvate is decarboxylated leading to the 2-carbon hydrohyethyl bound to TPP. The E2 component contains covalently-bound lipoyl cofactors and transfers the hydroxyethyl group from TPP to an oxidized form of covalently bound lipoamide, and the resulting acetyl group is then transferred to free coenzyme A to form acetyl-CoA and reduced dihydrolipoamide-E2. Finally, the flavoprotein dihydrolipoamide dehydrogenase (E3) re-oxidizes the lipoyl group of dihydrolipoamide-E2 to form lipoamide-E2 and NADH. A fourth subunit, E3BP, is responsible for tethering E3 in proximity to the core, forming the entire metabolon. The chain is Pyruvate dehydrogenase E1 component subunit beta, mitochondrial from Chaetomium thermophilum (strain DSM 1495 / CBS 144.50 / IMI 039719) (Thermochaetoides thermophila).